The chain runs to 323 residues: MTNFKWIVAAAGLLSGQVLAAPTATSTHAKRATVSDAAFGYASLNGGTTGGAGGTTTTVSSYAAFTSAVSGDDAKVVYVDGTIKQTADQVKIGSNTSIIGKDANAILEGFGVLVKEKENVIIRNLGVSKVLADNGDAIGVQYSNNVWIDHCDVSSDRDHDKDYYDGLIDITHGSDYVTVSNTFIHDHWKASLVGHSDSNEDEDSGHLTVTYANNYWYNINSRAPSFRFGTGHVYNSYYLDVSDGINTRDGAQLLVESNQFVDSKKALYSTDDGYAVSNDNDFGDSENTAEEGTLTSMPYDYTLLGSANVKAAVVGTAGQTLTF.

Residues 1–20 form the signal peptide; that stretch reads MTNFKWIVAAAGLLSGQVLA. A glycan (N-linked (GlcNAc...) asparagine) is linked at Asn95. Ca(2+) is bound by residues Asp136, Asp165, and Asp169. Residue Arg222 is part of the active site.

This sequence belongs to the polysaccharide lyase 1 family. Ca(2+) is required as a cofactor.

It localises to the secreted. It carries out the reaction Eliminative cleavage of (1-&gt;4)-alpha-D-galacturonan to give oligosaccharides with 4-deoxy-alpha-D-galact-4-enuronosyl groups at their non-reducing ends.. Functionally, pectinolytic enzyme consist of four classes of enzymes: pectin lyase, polygalacturonase, pectin methylesterase and rhamnogalacturonase. Among pectinolytic enzymes, pectin lyase is the most important in depolymerization of pectin, since it cleaves internal glycosidic bonds of highly methylated pectins. Favors pectate, the anion, over pectin, the methyl ester. This chain is Probable pectate lyase A (plyA), found in Aspergillus niger (strain ATCC MYA-4892 / CBS 513.88 / FGSC A1513).